The following is a 165-amino-acid chain: MKVKINEVHSVFAWSWHIPSTSDEDAANNDPIGNDEDEDVCGICRASYNGTCPSCKFPGDQCPLVIGLCHHNFHDHCIYRWLDTPTSKGLCPMCRQTFQLQKGLAINDAHVQKFVEIVSRRREEMIEEGVAEEFVDFDEPIRQNTDNPIGRQQVDTILDEDFLLR.

Residues 52 to 95 (CPSCKFPGDQCPLVIGLCHHNFHDHCIYRWLDTPTSKGLCPMCR) form an RING-type; atypical zinc finger.

In terms of assembly, the APC/C is composed of at least 13 subunits that stay tightly associated throughout the cell cycle: APC1, APC2, APC4, APC5, APC9, APC11, CDC16, CDC23, CDC26, CDC27, DOC1, MND2 and SWM1.

The protein operates within protein modification; protein ubiquitination. Probably catalytic subunit of the anaphase promoting complex/cyclosome (APC/C), a cell cycle-regulated E3 ubiquitin-protein ligase complex that controls progression through mitosis and the G1 phase of the cell cycle. The APC/C is thought to confer substrate specificity and, in the presence of ubiquitin-conjugating E2 enzymes, it catalyzes the formation of protein-ubiquitin conjugates that are subsequently degraded by the 26S proteasome. In early mitosis, the APC/C is activated by CDC20 and targets securin PDS1, the B-type cyclin CLB5, and other anaphase inhibitory proteins for proteolysis, thereby triggering the separation of sister chromatids at the metaphase-to-anaphase transition. In late mitosis and in G1, degradation of CLB5 allows activation of the APC/C by CDH1, which is needed to destroy CDC20 and the B-type cyclin CLB2 to allow exit from mitosis and creating the low CDK state necessary for cytokinesis and for reforming prereplicative complexes in G1 prior to another round of replication. APC11 is required to recruit the ubiquitin-conjugating enzyme E2 to the APC/C. The sequence is that of Anaphase-promoting complex subunit 11 (APC11) from Saccharomyces cerevisiae (strain ATCC 204508 / S288c) (Baker's yeast).